Consider the following 195-residue polypeptide: Small ribosomal subunit protein uS4B (195 aa).

The S4 RNA-binding domain occupies 107 to 181 (RRLQTQVYKL…VARRNAARKA (75 aa)). Residues 161-195 (TSPFGGARPGRVARRNAARKAEASGEAAEEAEDEE) form a disordered region. Lys180 participates in a covalent cross-link: Glycyl lysine isopeptide (Lys-Gly) (interchain with G-Cter in ubiquitin). Phosphoserine is present on Ser184.

The protein belongs to the universal ribosomal protein uS4 family. As to quaternary structure, component of the small ribosomal subunit (SSU). Mature yeast ribosomes consist of a small (40S) and a large (60S) subunit. The 40S small subunit contains 1 molecule of ribosomal RNA (18S rRNA) and 33 different proteins (encoded by 57 genes). The large 60S subunit contains 3 rRNA molecules (25S, 5.8S and 5S rRNA) and 46 different proteins (encoded by 81 genes). Interacts with snoRNA U3. uS11 interacts with MPP10. Component of the ribosomal small subunit (SSU) processome composed of at least 40 protein subunits and snoRNA U3.

The protein resides in the cytoplasm. It is found in the nucleus. Its subcellular location is the nucleolus. Functionally, component of the ribosome, a large ribonucleoprotein complex responsible for the synthesis of proteins in the cell. The small ribosomal subunit (SSU) binds messenger RNAs (mRNAs) and translates the encoded message by selecting cognate aminoacyl-transfer RNA (tRNA) molecules. The large subunit (LSU) contains the ribosomal catalytic site termed the peptidyl transferase center (PTC), which catalyzes the formation of peptide bonds, thereby polymerizing the amino acids delivered by tRNAs into a polypeptide chain. The nascent polypeptides leave the ribosome through a tunnel in the LSU and interact with protein factors that function in enzymatic processing, targeting, and the membrane insertion of nascent chains at the exit of the ribosomal tunnel. uS4 is involved in nucleolar processing of pre-18S ribosomal RNA and ribosome assembly. The sequence is that of Small ribosomal subunit protein uS4B from Saccharomyces cerevisiae (strain ATCC 204508 / S288c) (Baker's yeast).